Consider the following 653-residue polypeptide: MALVRGAEPAAGPSRWLPTHVQVTVLRARGLRGKSSGAGSTSDAYTVIQVGREKYSTSVVEKTHGCPEWREECSFELPPGALDGLLRAQEADAGPAPWAASSAAACELVLTTMHRSLIGVDKFLGQATVALDEVFGAGRAQHTQWYKLHSKPGKKEKERGEIEVTIQFTRNNLSASMFDLSMKDKPRSPFSKIRDKMKGKKKYDLESASAILPSSAIEDPDLGSLGKMGKAKGFFLRNKLRKSSLTQSNTSLGSDSTLSSASGSLAYQGPGAELLTRSPSRSSWLSTEGGRDSAQSPKLFTHKRTYSDEANQMRVAPPRALLDLQGHLDAASRSSLCVNGSHIYNEEPQGPVRHRSSISGSLPSSGSLQAVSSRFSEEGPRSTDDTWPRGSRSNSSSEAVLGQEELSAQAKVLAPGASHPGEEEGARLPEGKPVQVATPIVASSEAVAEKEGARKEERKPRMGLFHHHHQGLSRSELGRRSSLGEKGGPILGASPHHSSSGEEKAKSSWFGLREAKDPTQKPSPHPVKPLSAAPVEGSPDRKQSRSSLSIALSSGLEKLKTVTSGSIQPVTQAPQAGQMVDTKRLKDSAVLDQSAKYYHLTHDELISLLLQRERELSQRDEHVQELESYIDRLLVRIMETSPTLLQIPPGPPK.

The region spanning 5-146 (RGAEPAAGPS…AGRAQHTQWY (142 aa)) is the C2 domain. 6 positions are modified to phosphoserine: Ser176, Ser283, Ser286, Ser307, Ser357, and Ser367. Positions 269 to 300 (GPGAELLTRSPSRSSWLSTEGGRDSAQSPKLF) are disordered. Residues 277 to 286 (RSPSRSSWLS) show a composition bias toward polar residues. Disordered stretches follow at residues 342–402 (HIYN…AVLG) and 415–548 (PGAS…RSSL). Low complexity predominate over residues 357-368 (SISGSLPSSGSL). The segment covering 375 to 387 (FSEEGPRSTDDTW) has biased composition (basic and acidic residues). Phosphoserine is present on residues Ser391 and Ser395. 2 stretches are compositionally biased toward basic and acidic residues: residues 420–430 (PGEEEGARLPE) and 447–460 (VAEKEGARKEERKP). Ser494, Ser538, Ser547, and Ser553 each carry phosphoserine. In terms of domain architecture, FIP-RBD spans 586-648 (KDSAVLDQSA…ETSPTLLQIP (63 aa)).

In terms of assembly, interacts with RAB11FIP4. Interacts with NAPG. Interacts with RO60. Interacts with RAB11A that has been activated by GTP binding. As to quaternary structure, (Microbial infection) Interacts with Kaposi's sarcoma-associated herpesvirus/HHV-8 protein ORF45; this interaction results in the lysosomal degradation of ORF45 and the inhibition of viral particle release. Post-translationally, phosphorylated on serine and threonine residues. Phosphorylation at Ser-357 is PKA-dependent. In terms of tissue distribution, detected at low levels in heart, brain, placenta, lung, liver, adipocytes, kidney, spleen, skeletal muscle and pancreas.

It is found in the cytoplasm. The protein resides in the recycling endosome membrane. Its subcellular location is the early endosome membrane. The protein localises to the golgi apparatus membrane. It localises to the cytoplasmic vesicle. It is found in the secretory vesicle membrane. The protein resides in the mitochondrion membrane. Rab effector involved in protein trafficking from apical recycling endosomes to the apical plasma membrane. Involved in insulin granule exocytosis. May regulate V-ATPase intracellular transport in response to extracellular acidosis. In Homo sapiens (Human), this protein is Rab11 family-interacting protein 5.